A 155-amino-acid polypeptide reads, in one-letter code: 6,7-dimethyl-8-ribityllumazine synthase (155 aa).

5-amino-6-(D-ribitylamino)uracil contacts are provided by residues F26, 60 to 62 (ALE), and 84 to 86 (AVI). 89 to 90 (ET) contacts (2S)-2-hydroxy-3-oxobutyl phosphate. The active-site Proton donor is the H92. Residue N117 participates in 5-amino-6-(D-ribitylamino)uracil binding. R131 serves as a coordination point for (2S)-2-hydroxy-3-oxobutyl phosphate.

Belongs to the DMRL synthase family.

The enzyme catalyses (2S)-2-hydroxy-3-oxobutyl phosphate + 5-amino-6-(D-ribitylamino)uracil = 6,7-dimethyl-8-(1-D-ribityl)lumazine + phosphate + 2 H2O + H(+). It functions in the pathway cofactor biosynthesis; riboflavin biosynthesis; riboflavin from 2-hydroxy-3-oxobutyl phosphate and 5-amino-6-(D-ribitylamino)uracil: step 1/2. In terms of biological role, catalyzes the formation of 6,7-dimethyl-8-ribityllumazine by condensation of 5-amino-6-(D-ribitylamino)uracil with 3,4-dihydroxy-2-butanone 4-phosphate. This is the penultimate step in the biosynthesis of riboflavin. The polypeptide is 6,7-dimethyl-8-ribityllumazine synthase (Chromobacterium violaceum (strain ATCC 12472 / DSM 30191 / JCM 1249 / CCUG 213 / NBRC 12614 / NCIMB 9131 / NCTC 9757 / MK)).